The following is a 153-amino-acid chain: Arachidonate 5-lipoxygenase-activating protein (153 aa).

Residues 1–8 (MDQETVGN) lie on the Lumenal side of the membrane. Residues 9-30 (VVLLAIVTLISVIQNGFFAHKV) traverse the membrane as a helical segment. The Cytoplasmic portion of the chain corresponds to 31–52 (EHESKTQNGRSFQRTGTLAFER). Residues 53–77 (VYTANQNCVDAYPTFLVMLWSAGLL) traverse the membrane as a helical segment. The Lumenal portion of the chain corresponds to 78-80 (CSQ). Residues 81-102 (VPAAFAGLMYLFVRQKYFVGYL) traverse the membrane as a helical segment. Residues 103–107 (GERRQ) lie on the Cytoplasmic side of the membrane. The stretch at 108-115 (STPGYIFG) is an intramembrane region. Residues 116–128 (KRIILFLFLMSLA) form a helical membrane-spanning segment. At 129 to 153 (GIFNYYLILFFGSDFENYIKTITTT) the chain is on the lumenal side.

This sequence belongs to the MAPEG family. Homotrimer. Interacts with LTC4S and ALOX5.

The protein resides in the nucleus membrane. It localises to the endoplasmic reticulum membrane. Its function is as follows. Required for leukotriene biosynthesis by ALOX5 (5-lipoxygenase). Anchors ALOX5 to the membrane. Binds arachidonic acid, and could play an essential role in the transfer of arachidonic acid to ALOX5. Binds to MK-886, a compound that blocks the biosynthesis of leukotrienes. This is Arachidonate 5-lipoxygenase-activating protein (ALOX5AP) from Equus caballus (Horse).